The chain runs to 236 residues: L-aspartate dehydrogenase (236 aa).

NAD(+)-binding positions include 10 to 11, Asp-31, 58 to 59, Tyr-66, 80 to 81, Ala-111, and Asn-162; these read AI, AS, and LS. Residue His-189 is part of the active site. 212–215 serves as a coordination point for NAD(+); it reads NPKT.

This sequence belongs to the L-aspartate dehydrogenase family. As to quaternary structure, homodimer.

It carries out the reaction L-aspartate + NADP(+) + H2O = oxaloacetate + NH4(+) + NADPH + H(+). The catalysed reaction is L-aspartate + NAD(+) + H2O = oxaloacetate + NH4(+) + NADH + H(+). It functions in the pathway cofactor biosynthesis; NAD(+) biosynthesis; iminoaspartate from L-aspartate (dehydrogenase route): step 1/1. Specifically catalyzes the NAD or NADP-dependent dehydrogenation of L-aspartate to iminoaspartate. The polypeptide is L-aspartate dehydrogenase (Archaeoglobus fulgidus (strain ATCC 49558 / DSM 4304 / JCM 9628 / NBRC 100126 / VC-16)).